The sequence spans 123 residues: UPF0102 protein PputGB1_4524 (123 aa).

It belongs to the UPF0102 family.

The protein is UPF0102 protein PputGB1_4524 of Pseudomonas putida (strain GB-1).